Here is a 336-residue protein sequence, read N- to C-terminus: Retinol dehydrogenase 14 (336 aa).

Residue T5 is modified to Phosphothreonine. Residue 50–56 (GANSGLG) coordinates NADP(+). Substrate is bound at residue S192. Y217 functions as the Proton acceptor in the catalytic mechanism.

The protein belongs to the short-chain dehydrogenases/reductases (SDR) family. In terms of tissue distribution, widely expressed.

The catalysed reaction is all-trans-retinol + NADP(+) = all-trans-retinal + NADPH + H(+). It catalyses the reaction 9-cis-retinol + NADP(+) = 9-cis-retinal + NADPH + H(+). It carries out the reaction 11-cis-retinol + NADP(+) = 11-cis-retinal + NADPH + H(+). It participates in cofactor metabolism; retinol metabolism. In terms of biological role, retinol dehydrogenase with a clear preference for NADP. Displays high activity towards 9-cis, 11-cis and all-trans-retinol. Shows a very weak activity towards 13-cis-retinol. Has no activity towards steroid. This chain is Retinol dehydrogenase 14 (RDH14), found in Homo sapiens (Human).